Here is a 151-residue protein sequence, read N- to C-terminus: Caveolin-3 (151 aa).

Topologically, residues 1–83 (MMAEEHTDLE…RLLSTLLGVP (83 aa)) are cytoplasmic. Residue Lys38 forms a Glycyl lysine isopeptide (Lys-Gly) (interchain with G-Cter in SUMO3) linkage. The tract at residues 64 to 114 (TFTVSKYWCYRLLSTLLGVPLALLWGFLFACISFCHIWAVVPCIKSYLIEI) is required for interaction with DAG1. Residues 84–104 (LALLWGFLFACISFCHIWAVV) constitute an intramembrane region (helical). The Cytoplasmic portion of the chain corresponds to 105-151 (PCIKSYLIEIQCISHIYSLCIRTFCNPLFAALGQVCSNIKVMLRKEV).

This sequence belongs to the caveolin family. As to quaternary structure, homooligomer. Interacts with DYSF. Interacts with DLG1 and KCNA5; forms a ternary complex. Interacts with DAG1 (via its C-terminal); the interaction prevents binding of DAG1 with DMD. Interacts with TRIM72. Interacts with MUSK; may regulate MUSK signaling. Interacts with POPDC1. Interacts with CAVIN1, CAVIN2 and CAVIN4. Post-translationally, sumoylation with SUMO3 by PIAS4 may reduce agonist-induced internalization and desensitization of adrenergic receptor ABRD2.

It is found in the golgi apparatus membrane. It localises to the cell membrane. The protein resides in the membrane. The protein localises to the caveola. Its subcellular location is the sarcolemma. Functionally, may act as a scaffolding protein within caveolar membranes. Interacts directly with G-protein alpha subunits and can functionally regulate their activity. May also regulate voltage-gated potassium channels. Plays a role in the sarcolemma repair mechanism of both skeletal muscle and cardiomyocytes that permits rapid resealing of membranes disrupted by mechanical stress. Mediates the recruitment of CAVIN2 and CAVIN3 proteins to the caveolae. This chain is Caveolin-3 (CAV3), found in Bos taurus (Bovine).